The sequence spans 141 residues: MVLYANRESLIKRYTLKVLEQIAWLPEAQSLDEAKVQEALEDASQTIDSYLGGRYVLPLKTVPAVLERHCCYIARYFLEKNRATDQARQDYEDTIRFLEKVASGAISLGLSDDDETVESENGAMMESAGSVWGRNTSKGFI.

The protein to phage Mu protein gp36.

The polypeptide is Mu-like prophage FluMu protein gp36 (Haemophilus influenzae (strain ATCC 51907 / DSM 11121 / KW20 / Rd)).